The primary structure comprises 243 residues: Type III pantothenate kinase (243 aa).

6-13 (DIGNTVAK) is an ATP binding site. Substrate contacts are provided by residues Y86 and 93 to 96 (GYDR). D95 serves as the catalytic Proton acceptor. Residue D116 coordinates K(+). T119 is a binding site for ATP. T171 lines the substrate pocket.

Belongs to the type III pantothenate kinase family. Homodimer. NH4(+) serves as cofactor. It depends on K(+) as a cofactor.

It is found in the cytoplasm. The catalysed reaction is (R)-pantothenate + ATP = (R)-4'-phosphopantothenate + ADP + H(+). Its pathway is cofactor biosynthesis; coenzyme A biosynthesis; CoA from (R)-pantothenate: step 1/5. Its function is as follows. Catalyzes the phosphorylation of pantothenate (Pan), the first step in CoA biosynthesis. In Bacteroides fragilis (strain YCH46), this protein is Type III pantothenate kinase.